Here is a 281-residue protein sequence, read N- to C-terminus: 2-dehydro-3-deoxyphosphooctonate aldolase (281 aa).

Belongs to the KdsA family.

Its subcellular location is the cytoplasm. It carries out the reaction D-arabinose 5-phosphate + phosphoenolpyruvate + H2O = 3-deoxy-alpha-D-manno-2-octulosonate-8-phosphate + phosphate. It participates in carbohydrate biosynthesis; 3-deoxy-D-manno-octulosonate biosynthesis; 3-deoxy-D-manno-octulosonate from D-ribulose 5-phosphate: step 2/3. It functions in the pathway bacterial outer membrane biogenesis; lipopolysaccharide biosynthesis. In Pseudomonas putida (strain GB-1), this protein is 2-dehydro-3-deoxyphosphooctonate aldolase.